We begin with the raw amino-acid sequence, 266 residues long: Glucosamine-6-phosphate deaminase (266 aa).

The active-site Proton acceptor; for enolization step is the aspartate 72. Catalysis depends on aspartate 141, which acts as the For ring-opening step. Catalysis depends on histidine 143, which acts as the Proton acceptor; for ring-opening step. The active-site For ring-opening step is the glutamate 148.

Belongs to the glucosamine/galactosamine-6-phosphate isomerase family. NagB subfamily. Homohexamer.

The enzyme catalyses alpha-D-glucosamine 6-phosphate + H2O = beta-D-fructose 6-phosphate + NH4(+). It participates in amino-sugar metabolism; N-acetylneuraminate degradation; D-fructose 6-phosphate from N-acetylneuraminate: step 5/5. Its activity is regulated as follows. Allosterically activated by N-acetylglucosamine 6-phosphate (GlcNAc6P). In terms of biological role, catalyzes the reversible isomerization-deamination of glucosamine 6-phosphate (GlcN6P) to form fructose 6-phosphate (Fru6P) and ammonium ion. The polypeptide is Glucosamine-6-phosphate deaminase (Yersinia enterocolitica serotype O:8 / biotype 1B (strain NCTC 13174 / 8081)).